The primary structure comprises 209 residues: Peroxynitrite isomerase 2 (209 aa).

The GXWXGXG signature appears at 56–62; sequence GVWRGEG. Lysine 172 and histidine 199 together coordinate heme b.

It belongs to the nitrobindin family. Homodimer. Requires heme b as cofactor.

It catalyses the reaction peroxynitrite = nitrate. It participates in nitrogen metabolism. Heme-binding protein able to scavenge peroxynitrite and to protect free L-tyrosine against peroxynitrite-mediated nitration, by acting as a peroxynitrite isomerase that converts peroxynitrite to nitrate. Therefore, this protein likely plays a role in peroxynitrite sensing and in the detoxification of reactive nitrogen and oxygen species (RNS and ROS, respectively). Is able to bind nitric oxide (NO) in vitro, but may act as a sensor of peroxynitrite levels in vivo. The protein is Peroxynitrite isomerase 2 of Mycolicibacterium gilvum (strain PYR-GCK) (Mycobacterium gilvum (strain PYR-GCK)).